The following is an 81-amino-acid chain: Small ribosomal subunit protein eS21 (81 aa).

It belongs to the eukaryotic ribosomal protein eS21 family. In terms of assembly, component of the 40S small ribosomal subunit.

The protein localises to the cytoplasm. It localises to the cytosol. The protein resides in the rough endoplasmic reticulum. Functionally, component of the small ribosomal subunit. The ribosome is a large ribonucleoprotein complex responsible for the synthesis of proteins in the cell. In Danio rerio (Zebrafish), this protein is Small ribosomal subunit protein eS21 (rps21).